Here is a 378-residue protein sequence, read N- to C-terminus: Opsin Rh4 (378 aa).

At 1-53 (MEPLCNASEPPLRPEARSSGNGDLQFLGWNVPPDQIQYIPEHWLTQLEPPASM) the chain is on the extracellular side. The N-linked (GlcNAc...) asparagine glycan is linked to Asn6. A helical transmembrane segment spans residues 54–78 (HYMLGVFYIFLFCASTVGNGMVIWI). Residues 79–90 (FSTSKSLRTPSN) are Cytoplasmic-facing. Residues 91–111 (MFVLNLAVFDLIMCLKAPIFI) traverse the membrane as a helical segment. The Extracellular portion of the chain corresponds to 112–127 (YNSFHRGFALGNTWCQ). The cysteines at positions 126 and 203 are disulfide-linked. Residues 128–148 (IFASIGSYSGIGAGMTNAAIG) traverse the membrane as a helical segment. The Cytoplasmic segment spans residues 149 to 167 (YDRYNVITKPMNRNMTFTK). Residues 168–192 (AVIMNIIIWLYCTPWVVLPLTQFWD) form a helical membrane-spanning segment. At 193 to 216 (RFVPEGYLTSCSFDYLSDNFDTRL) the chain is on the extracellular side. A helical transmembrane segment spans residues 217-244 (FVGTIFFFSFVCPTLMILYYYSQIVGHV). Over 245-280 (FSHEKALREQAKKMNVESLRSNVDKSKETAEIRIAK) the chain is Cytoplasmic. The helical transmembrane segment at 281–304 (AAITICFLFFVSWTPYGVMSLIGA) threads the bilayer. Over 305-312 (FGDKSLLT) the chain is Extracellular. The chain crosses the membrane as a helical span at residues 313 to 337 (PGATMIPACTCKLVACIDPFVYAIS). Position 324 is an N6-(retinylidene)lysine (Lys324). The Cytoplasmic portion of the chain corresponds to 338–378 (HPRYRLELQKRCPWLGVNEKSGEISSAQSTTTQEQQQTTAA).

It belongs to the G-protein coupled receptor 1 family. Opsin subfamily. Phosphorylated on some or all of the serine and threonine residues present in the C-terminal region.

The protein localises to the membrane. Functionally, visual pigments are the light-absorbing molecules that mediate vision. They consist of an apoprotein, opsin, covalently linked to cis-retinal. The chain is Opsin Rh4 (Rh4) from Drosophila melanogaster (Fruit fly).